A 305-amino-acid polypeptide reads, in one-letter code: tRNA dimethylallyltransferase (305 aa).

Glycine 8–serine 15 lines the ATP pocket. Threonine 10–serine 15 contacts substrate. Residues aspartate 33–alanine 36 are interaction with substrate tRNA.

Belongs to the IPP transferase family. In terms of assembly, monomer. Mg(2+) is required as a cofactor.

It carries out the reaction adenosine(37) in tRNA + dimethylallyl diphosphate = N(6)-dimethylallyladenosine(37) in tRNA + diphosphate. Catalyzes the transfer of a dimethylallyl group onto the adenine at position 37 in tRNAs that read codons beginning with uridine, leading to the formation of N6-(dimethylallyl)adenosine (i(6)A). In Aquifex aeolicus (strain VF5), this protein is tRNA dimethylallyltransferase.